A 263-amino-acid polypeptide reads, in one-letter code: Probable cyclic nucleotide phosphodiesterase CPS_4178 (263 aa).

Fe cation is bound by residues D21, H23, D62, N94, H160, H198, and H200. Residues H23, D62, and N94–H95 each bind AMP. Residue H200 participates in AMP binding.

The protein belongs to the cyclic nucleotide phosphodiesterase class-III family. Fe(2+) serves as cofactor.

The polypeptide is Probable cyclic nucleotide phosphodiesterase CPS_4178 (Colwellia psychrerythraea (strain 34H / ATCC BAA-681) (Vibrio psychroerythus)).